A 259-amino-acid polypeptide reads, in one-letter code: Putative hydro-lyase Rxyl_2409 (259 aa).

The segment at 1–24 is disordered; sequence MGAPGAAEARERIRRGEHAGPTAG. The span at 8–18 shows a compositional bias: basic and acidic residues; it reads EARERIRRGEH.

It belongs to the D-glutamate cyclase family.

This Rubrobacter xylanophilus (strain DSM 9941 / JCM 11954 / NBRC 16129 / PRD-1) protein is Putative hydro-lyase Rxyl_2409.